The sequence spans 154 residues: Putative pre-16S rRNA nuclease (154 aa).

The protein belongs to the YqgF nuclease family.

The protein localises to the cytoplasm. Its function is as follows. Could be a nuclease involved in processing of the 5'-end of pre-16S rRNA. The polypeptide is Putative pre-16S rRNA nuclease (Ruegeria pomeroyi (strain ATCC 700808 / DSM 15171 / DSS-3) (Silicibacter pomeroyi)).